A 299-amino-acid polypeptide reads, in one-letter code: Acetaldehyde dehydrogenase (299 aa).

Catalysis depends on Cys-126, which acts as the Acyl-thioester intermediate. NAD(+)-binding positions include 157-165 and Asn-267; that span reads SAGPGTRQN.

The protein belongs to the acetaldehyde dehydrogenase family.

The catalysed reaction is acetaldehyde + NAD(+) + CoA = acetyl-CoA + NADH + H(+). This is Acetaldehyde dehydrogenase (mhpF) from Carboxydothermus hydrogenoformans (strain ATCC BAA-161 / DSM 6008 / Z-2901).